Consider the following 207-residue polypeptide: Transcriptional regulatory protein RcsA (207 aa).

The 66-residue stretch at 131–196 (INLPTLSLSR…VIYHVVRLTD (66 aa)) folds into the HTH luxR-type domain. The segment at residues 155 to 174 (TIQISDRMNIKAKTVSSHKG) is a DNA-binding region (H-T-H motif).

This sequence belongs to the RcsA family. Interacts with RcsB.

Component of the Rcs signaling system, which controls transcription of numerous genes. Binds, with RcsB, to the RcsAB box to regulate expression of genes. This chain is Transcriptional regulatory protein RcsA, found in Salmonella typhimurium (strain LT2 / SGSC1412 / ATCC 700720).